Here is an 862-residue protein sequence, read N- to C-terminus: Kinesin-like protein KIN-7J (862 aa).

In terms of domain architecture, Kinesin motor spans arginine 9–valine 331. Glycine 95 to threonine 102 lines the ATP pocket. Residues valine 340 to aspartate 415 are a coiled coil. Basic and acidic residues-rich tracts occupy residues glutamate 475 to glutamine 499 and proline 518 to glutamate 531. 2 disordered regions span residues glutamate 475–serine 532 and aspartate 596–asparagine 643. The span at serine 598–tyrosine 610 shows a compositional bias: polar residues. The span at arginine 613 to aspartate 629 shows a compositional bias: basic and acidic residues.

The protein belongs to the TRAFAC class myosin-kinesin ATPase superfamily. Kinesin family. KIN-7 subfamily.

This is Kinesin-like protein KIN-7J from Oryza sativa subsp. japonica (Rice).